The chain runs to 74 residues: Sodium channel neurotoxin MeuNaTxalpha-11 (74 aa).

Positions 1-7 (LMTGVES) are cleaved as a signal peptide. An LCN-type CS-alpha/beta domain is found at 9–73 (RDAYIAKPHN…VPIRIPGKCH (65 aa)). 4 disulfides stabilise this stretch: Cys19–Cys72, Cys23–Cys45, Cys31–Cys55, and Cys35–Cys57. Arg74 is a propeptide (removed by a carboxypeptidase).

Belongs to the long (4 C-C) scorpion toxin superfamily. Sodium channel inhibitor family. Alpha subfamily. Expressed by the venom gland.

Its subcellular location is the secreted. Alpha toxins bind voltage-independently at site-3 of sodium channels (Nav) and inhibit the inactivation of the activated channels, thereby blocking neuronal transmission. The sequence is that of Sodium channel neurotoxin MeuNaTxalpha-11 from Mesobuthus eupeus (Lesser Asian scorpion).